The following is a 178-amino-acid chain: Small ribosomal subunit protein uS5 (178 aa).

The region spanning 15–78 (FEEKIIEIRR…SAAKRNIVEV (64 aa)) is the S5 DRBM domain.

It belongs to the universal ribosomal protein uS5 family. As to quaternary structure, part of the 30S ribosomal subunit. Contacts proteins S4 and S8.

In terms of biological role, with S4 and S12 plays an important role in translational accuracy. Located at the back of the 30S subunit body where it stabilizes the conformation of the head with respect to the body. This is Small ribosomal subunit protein uS5 from Thermotoga maritima (strain ATCC 43589 / DSM 3109 / JCM 10099 / NBRC 100826 / MSB8).